Consider the following 126-residue polypeptide: MRHKIKGRKLNVTSSHRQAMLANMAVALVTHEQIKTTLPKAKELRPYIETLITKAKKADLTVRRSVLSKIKDKKAVEKLINILGTRYKDRPGGYTRIIKAGFRYGDLAPIAYIEFVDRDINAKGNI.

It belongs to the bacterial ribosomal protein bL17 family. As to quaternary structure, part of the 50S ribosomal subunit. Contacts protein L32.

The protein is Large ribosomal subunit protein bL17 of Rickettsia felis (strain ATCC VR-1525 / URRWXCal2) (Rickettsia azadi).